The primary structure comprises 365 residues: Aminomethyltransferase (365 aa).

The protein belongs to the GcvT family. In terms of assembly, the glycine cleavage system is composed of four proteins: P, T, L and H.

It carries out the reaction N(6)-[(R)-S(8)-aminomethyldihydrolipoyl]-L-lysyl-[protein] + (6S)-5,6,7,8-tetrahydrofolate = N(6)-[(R)-dihydrolipoyl]-L-lysyl-[protein] + (6R)-5,10-methylene-5,6,7,8-tetrahydrofolate + NH4(+). The glycine cleavage system catalyzes the degradation of glycine. The chain is Aminomethyltransferase from Aeromonas hydrophila subsp. hydrophila (strain ATCC 7966 / DSM 30187 / BCRC 13018 / CCUG 14551 / JCM 1027 / KCTC 2358 / NCIMB 9240 / NCTC 8049).